The chain runs to 561 residues: Laccase-1 (561 aa).

The signal sequence occupies residues 1-20 (MKNSFFSSLAKFASLSLAFA). 2 Plastocyanin-like domains span residues 68-185 (VVQN…GPAT) and 191-337 (DLGM…YTGS). 3 N-linked (GlcNAc...) asparagine glycosylation sites follow: N71, N87, and N114. Positions 119, 121, 163, and 165 each coordinate Cu cation. A disulfide bond links C140 and C542. N-linked (GlcNAc...) asparagine glycosylation is found at N226, N284, N327, N391, and N398. In terms of domain architecture, Plastocyanin-like 3 spans 396–525 (LLNWTDPTLL…ALQFVESESS (130 aa)). Cu cation-binding residues include H445, H448, H450, H504, C505, H506, and H510.

This sequence belongs to the multicopper oxidase family. Cu cation serves as cofactor.

It is found in the secreted. It carries out the reaction 4 hydroquinone + O2 = 4 benzosemiquinone + 2 H2O. Lignin degradation and detoxification of lignin-derived products. This is Laccase-1 (lcc1) from Botryotinia fuckeliana (Noble rot fungus).